Reading from the N-terminus, the 397-residue chain is Tubby-like protein 8 (397 aa).

Over residues 1 to 16 the composition is skewed to basic and acidic residues; sequence MAGSRKVNDLLEENKG. The tract at residues 1–46 is disordered; the sequence is MAGSRKVNDLLEENKGNVDTITGSLSTQKGEDKENVSPEKVSTSVE. Positions 17 to 28 are enriched in polar residues; it reads NVDTITGSLSTQ.

The protein belongs to the TUB family. As to expression, mostly expressed in roots, flowers and siliques.

This Arabidopsis thaliana (Mouse-ear cress) protein is Tubby-like protein 8.